The chain runs to 252 residues: Probable NADP-dependent dehydrogenase HI_1430 (252 aa).

7–31 (LVTGATAGFGLAICKKLIEAGYKVI) lines the NADP(+) pocket. Residue Ser-137 participates in substrate binding. Residue Tyr-150 is the Proton acceptor of the active site.

This sequence belongs to the short-chain dehydrogenases/reductases (SDR) family.

The sequence is that of Probable NADP-dependent dehydrogenase HI_1430 from Haemophilus influenzae (strain ATCC 51907 / DSM 11121 / KW20 / Rd).